The following is a 556-amino-acid chain: Formate--tetrahydrofolate ligase (556 aa).

65–72 (TPAGEGKS) is an ATP binding site.

The protein belongs to the formate--tetrahydrofolate ligase family.

The enzyme catalyses (6S)-5,6,7,8-tetrahydrofolate + formate + ATP = (6R)-10-formyltetrahydrofolate + ADP + phosphate. It participates in one-carbon metabolism; tetrahydrofolate interconversion. The protein is Formate--tetrahydrofolate ligase of Streptococcus thermophilus (strain ATCC BAA-491 / LMD-9).